Here is a 1229-residue protein sequence, read N- to C-terminus: Membrane-anchored lipid-binding protein SIP3 (1229 aa).

Over Met-1–Met-1066 the chain is Cytoplasmic. The 115-residue stretch at Ser-309–Lys-423 folds into the PH domain. A VASt domain is found at Glu-771–Gly-976. The chain crosses the membrane as a helical span at residues Met-1067 to Val-1087. The Lumenal segment spans residues Pro-1088–Thr-1229. The N-linked (GlcNAc...) asparagine glycan is linked to Asn-1206.

It belongs to the SIP3 family. As to quaternary structure, interacts with SNF1.

The protein localises to the endoplasmic reticulum membrane. Its function is as follows. May be involved in sterol transfer between intracellular membranes. This chain is Membrane-anchored lipid-binding protein SIP3, found in Saccharomyces cerevisiae (strain ATCC 204508 / S288c) (Baker's yeast).